The primary structure comprises 294 residues: Probable endonuclease 4 (294 aa).

9 residues coordinate Zn(2+): histidine 78, histidine 118, glutamate 157, aspartate 191, histidine 194, histidine 228, aspartate 241, histidine 243, and glutamate 273.

It belongs to the AP endonuclease 2 family. Zn(2+) is required as a cofactor.

The catalysed reaction is Endonucleolytic cleavage to 5'-phosphooligonucleotide end-products.. Functionally, endonuclease IV plays a role in DNA repair. It cleaves phosphodiester bonds at apurinic or apyrimidinic (AP) sites, generating a 3'-hydroxyl group and a 5'-terminal sugar phosphate. This is Probable endonuclease 4 from Streptomyces coelicolor (strain ATCC BAA-471 / A3(2) / M145).